A 617-amino-acid chain; its full sequence is Alkaline/neutral invertase E, chloroplastic (617 aa).

A chloroplast-targeting transit peptide spans 1–45; the sequence is MAASETVLRVPLGSVSQSCYLASFFVNSTPNLSFKPVSRNRKTVR. Position 87 is a phosphoserine (S87).

This sequence belongs to the glycosyl hydrolase 100 family. As to expression, expressed in roots, leaves and flowers.

It is found in the plastid. The protein localises to the chloroplast. It carries out the reaction Hydrolysis of terminal non-reducing beta-D-fructofuranoside residues in beta-D-fructofuranosides.. Functionally, chloroplastic invertase that cleaves sucrose into glucose and fructose and is associated with the development of the photosynthetic apparatus and the assimilation of nitrogen in seedlings to control the sucrose to hexose ratio. Participates in the carbon flux between the cytosol and plastids in leaves. This is Alkaline/neutral invertase E, chloroplastic from Arabidopsis thaliana (Mouse-ear cress).